The primary structure comprises 2422 residues: MGSLQDAHPHRVSVLFGPKCPKTDRSVLHIRRYLSSHRNTGWLEDAVQALPSVWHDVTKVWPAAEKIPGFCVGYLAAVAACWETDQTEFPKAVATMLRIAVCIGAVVDLDELEKQRATSMAVRWKTSADYKLLTALLSRYPGAYIACVTDESAATVTIWESQAAALVKELESNGLVVKSTQLRGRFHHSDHTSVVQEFLKLCQEDNRFHLPNGNPAVGLPRSNIDGEVPTLQSLLSVANESILISQANWNLTVSATISSLQLTDAKSIVSIGAGQCIPRKARGRILHTVEPPDSHHNTNTTQDSDVTTNASPLTAGYVNGTGPAATATTVPIAVTGMACRYPQADSMEELWKILEQGHCTVSPMPKNRFKLDELQREPKGPFWGNFLSRPDTFDHRFFKISAREAESMDPQQRLLLQVAYEAIESAGYCGLRASQLPQDVGCYVGVGTEDYSENVASRNATAFSATGTLQAFNSGRVSHYFGWTGPSVTIDTACSSAAVAIHLACQALQTNDCSMAVAGGVNVMTDPRWSQNLAAASFLSPTGASKAFDADANGYCRGEGAGLVVLRPLEAALRDGDPIHAVITGTSVNQGANCSPITVPDSNSQTTLYLKALSISGIKPDVVTYVEAHGTGTQVGDPIEFQSIRKTFAVPHRTERLYVGSIKDNIGHTETSSGVAGMLKTILMLQKRRIPKQANFTRLNPMITLQKEDQIFIPVESTDWKAEKRVAMVTNYGAAGSNAAIVLQEPTCTSRTPISGYREYLPSVIPVFVAARTEESIREYCKALQTAFLEAPQVNNVEVQDIAFNLARKQNRDMEYSVAFTTASGNDAELRERLEDIVSGRTRIEKKCQAAHPVVLCFGGQTGNTASISQNLVQSSELLRFHLYATAKAWLDSGLRVDRMIGHSFGQLTAVCVAGGLSLLDAMRLISSRAQLIRSEWKSDTGLMLSVRGEKETVQALLDAVSNAADIACVNGPESFVVAGDEATIHKMENIAVERGMKLRMQRLKNTHAFHSKLVDSILPGLTKIASTLNYRPLRIPVEPCSELADDWSLPTGDKIVQHSRKAVYFHNAIRRTISHMDSPCIWLEAGSASPIIRMVRRAVDASPSPRDHVYCPIDLSGPQAEENFAKVFSSLWSKGVQVQFWPFHGSQTGYRWINLPPYQFAKTSHWIDYDPNAFYSDPPKREAGRTDEPSLVKLLNNDGNVYLFGVNVNDPLFRMCTAGHAVVDQNLCPASLYFELVVRGAVAVLPLENDPTMYHIAGLDISAPLVLDMPGSVFLELTQRGSGPGQFTFVLFTRDGNQDSVAHATGKISISSEANDSGISSRFGSLRRLVNPSRWGFIATSPSSSGLKRSTVYQAFRRVVNYADYYRGVEEVYAVGHEATGRVLLPSSPTNKASCDPILIDNFIQVAGIHVNCLSETLDEEVFVCSSVGDVIIGELFVRRDPGVSVPWIVYSSSERESMKKSLCDIFVVDEATGSLALCILSATFTCVSIQSLKRTLTRLNNKALASTGVDVVVPAVAVAPAAPAASAAMPDSSRSEDGLRVVQAMLSELLGISAGEIPASAALGDVGVDSLMSTEVLSEINKRFKVVITNSELTAIADVSGLVQRIFPGGSVAHVETHSQPPDKIGITTGDRMPPPRVPPPTVIQEQSLPGFVDKARELFAASRTSNEYRQKTRFLGFCDSVFPQQMELVTVYVVAALKALNVDLQSLRFGQAVPSVEVLPQHGKVMNQLFAVLEYSGLVERRGTGMIRGHRAVNKSTATILHKKILSEHPQHASEHKLLHTTGSRLADCLIGAADPLSLLFQDAQARALMQDVYSNAPMFKSATMHLAQFLKDLLGQRCFQRRISILEIGAGTGGTTDYILKQLSSVAGLTFEYTFTDISSSLVTLARKRFKTYHFMHYATLDIEQDPAPELQGQYDIIISSNCIHATRSLATSCSNIQKLLRPQGILCLIELTRNLFWFDLVFGLLEGWWLFNDGRSHALAHERLWDQTLRQAGFNWVDWTDNDSEESKILRMIVASPSQPVLCSPGEAKSNAVAEETLVYSRKDGLELCADIYYPHGLDGEDRKRPVAILIHGGGHIMLSRKDVRPMQVKMLLDMGFLPVSIDYRLCPEVPLLEGPMVDACDALAWARHELPQLQLKRPDIRPDGGNVVAVGWSSGGHLAMTLAWTAPARSVRAPEAILSFYSPTDYTDPFWTKPNFPYQESVCMSDVPTSDPLLALHDTAITSYNPAPGKGVLGGWMSPSDPRSRIALHMNWTGQTLPVLFYGCKYKSLAAAAKGDEVLLPAPHMSEVEKACPLSQVRAGRYKTPTFLIHGTLDDLIPVQQAQRIHQQMLVCGVESVLRIVSDGLHLFDIIPHLKENKDASQAVLDGLAPHIPTDEYPNPPPKLPKMDTSYPKCLYLISGVPVKALEIMSCYVFHR.

The segment at 14–196 (VLFGPKCPKT…HHSDHTSVVQ (183 aa)) is N-terminal acylcarrier protein transacylase domain (SAT). The disordered stretch occupies residues 289–314 (VEPPDSHHNTNTTQDSDVTTNASPLT). Over residues 297–312 (NTNTTQDSDVTTNASP) the composition is skewed to polar residues. In terms of domain architecture, Ketosynthase family 3 (KS3) spans 329–745 (TVPIAVTGMA…GSNAAIVLQE (417 aa)). Residues cysteine 494, histidine 629, and histidine 668 each act as for beta-ketoacyl synthase activity in the active site. Residues 856–1121 (LCFGGQTGNT…CPIDLSGPQA (266 aa)) form a malonyl-CoA:ACP transacylase (MAT) domain region. Residue serine 904 is the For acyl/malonyl transferase activity of the active site. Positions 1190–1316 (PSLVKLLNND…GKISISSEAN (127 aa)) are N-terminal hotdog fold. Positions 1190-1495 (PSLVKLLNND…FTCVSIQSLK (306 aa)) constitute a PKS/mFAS DH domain. The segment at 1191-1494 (SLVKLLNNDG…TFTCVSIQSL (304 aa)) is product template (PT) domain. Histidine 1221 acts as the Proton acceptor; for dehydratase activity in catalysis. Residues 1345-1495 (SSGLKRSTVY…FTCVSIQSLK (151 aa)) are C-terminal hotdog fold. Catalysis depends on aspartate 1402, which acts as the Proton donor; for dehydratase activity. Positions 1535 to 1612 (SRSEDGLRVV…GLVQRIFPGG (78 aa)) constitute a Carrier domain. Serine 1572 is subject to O-(pantetheine 4'-phosphoryl)serine. Positions 1615 to 1636 (AHVETHSQPPDKIGITTGDRMP) are disordered. The segment at 1774 to 2007 (QHASEHKLLH…GFNWVDWTDN (234 aa)) is methyltransferase (CMeT) domain. Residues 2036-2383 (NAVAEETLVY…LAPHIPTDEY (348 aa)) are thioesterase (TE) domain. Catalysis depends on for thioesterase activity residues serine 2159, aspartate 2320, and histidine 2352.

It carries out the reaction 3 malonyl-CoA + acetyl-CoA + 2 S-adenosyl-L-methionine = 3,5-dimethylorsellinate + 2 S-adenosyl-L-homocysteine + 3 CO2 + 4 CoA. The protein operates within secondary metabolite biosynthesis; terpenoid biosynthesis. In terms of biological role, non-reducing polyketide synthase; part of the gene cluster that mediates the biosynthesis of terretonin, a fungal meroterpenoid that acts as a mycotoxin. The first step of the pathway is the synthesis of 3,5-dimethylorsellinic acid (DMOA) by the polyketide synthase trt4. DMOA is then prenylated into farnesyl-DMOA by the polyprenyl transferase trt2. Methylation by the methyltransferase trt5 then leads to farnesyl-DMOA methyl ester which is further subject to epoxidation by the FAD-dependent monooxygenase trt8 to yield epoxyfarnesyl-DMOA methyl ester. Cyclization of epoxyfarnesyl-DMOA methyl ester by the terpene cyclase trt1 leads to a tetracycle intermediate which is in turn converted to preterretonin. Dehydrogenase trt9 comes next to transform preterretonin to preterrenoid. The FAD-dependent monooxygenase trt3 is then required for the C-hydroxylation at C16 of preterrenoid to yield terrenoid. The cytochrome P450 trt6 catalyzes three successive oxidations to transform terrenoid into an unstable intermediate, which then undergoes the D-ring expansion and unusual rearrangement of the methoxy group to afford the core skeleton of terretonin. Trt14 catalyzes the D-ring expansion of terretonin involving intramolecular methoxy rearrangement as well as the hydrolysis of the expanded D-ring and the methyl ester moiety. Finally, the nonheme iron-dependent dioxygenase trt7 accomplishes the last two oxidation reactions steps to complete the biosynthesis of terretonin. Terretonin C is produced via spontaneous decarboxylation of the terretonin precursor. Another shunt product of the terretonin biosynthesis is dihydrofarnesyl-DMOA, derived from epoxyfarnesyl-DMOA through hydrolysis of the epoxide. In Aspergillus terreus (strain NIH 2624 / FGSC A1156), this protein is Non-reducing polyketide synthase trt4.